The sequence spans 128 residues: MKKVKTVGKNTKRFITGIVHIRATFNNTFVNVTDVCGNTLYQTSVGACGFSGSRKSTPYAAGKVADSAAKKVIERFGMKVVSVIIRGPGFGAEAAVKALRNCGLTVTSIADKTAIPHNGCRLRKKRRV.

It belongs to the universal ribosomal protein uS11 family. Part of the 30S ribosomal subunit. Interacts with proteins S7 and S18. Binds to IF-3.

Located on the platform of the 30S subunit, it bridges several disparate RNA helices of the 16S rRNA. Forms part of the Shine-Dalgarno cleft in the 70S ribosome. The sequence is that of Small ribosomal subunit protein uS11 from Wolbachia pipientis subsp. Culex pipiens (strain wPip).